An 879-amino-acid chain; its full sequence is MEPPAIPHITEGFYPLPEIVETFSHHVLQELVSLAEVLPSMSNVEKKKKILDWLLRSRAFTMRLLVLARWVHLSPSVHRCIDVVAFLQGQKFCFQNLVHVLQDIRYQLSFARLRNSDLVTALDILSTGTSLRLANAPTSKLYMLSESPLSTKQILQTLHALNMLIRIRLSLYEIIPTPFQHFTIANGRCTFTVPNEFSVSLTTNSQDPKSTGISFQWIVVDFQFHLPDFSSTPAKYRVFIELHLNEEIAAAFVLQKPILPLIYNILHKFCLYQRLNLLSQQTFQLSRESWLGHLRGVYDEKPPRLRLYYWPQLNVKKEGKPGKIGHYIHIFVNTQPISAFERTLSSKRSSCEYDHFLLLVEWHHDGIVEHVPLDDHMDAQHLLLLITQKHAQLILEQIRKELHPNIFSEHVGGGLKIHVFDNEIIVKVNSVTGRLVLSSSASPLSPPRHLRAAEKNIALNTQPPAQILNRLYFFCIQTQLLEVAQCAELHAVQGYYSFPYLTFSKGKWRKDGDSLWVLAYNVESNSWSVRLLNAAGQTLYTQDVHTTKGTLSIESFSRLSYLLEVQILLFNVQTACQARGMPFEYLPIPPKALIEDDFTTYVQTGCLCIMMPSSNEDMLPVVFVRAHDGQLIFDSRIKGKLPYQSETETEKNCYIDWRTGRITIRVQNFSSFEKTWIGLLKLVALSKTSAFNVDCITLKHVDFTYLDDEKFRATIHDDNTFTLHFFNRHSPFHLISQFLQDTFSDGPSAIQPLRVIMDRTRGVLVAQELGYVVLARSLRQYRIILSKNHGIQVLLNRHGCILQDLSYLSADSRYLEGTQTLTSQWEPCSWLNTVWEGDLGDDELNGQIEAAPEMHLIKMNKTADLTAILKRILAISRKK.

The protein belongs to the Mediator complex subunit 14 family. As to quaternary structure, component of the Mediator complex.

The protein localises to the nucleus. Functionally, component of the Mediator complex, a coactivator involved in the regulated transcription of nearly all RNA polymerase II-dependent genes. Mediator functions as a bridge to convey information from gene-specific regulatory proteins to the basal RNA polymerase II transcription machinery. Mediator is recruited to promoters by direct interactions with regulatory proteins and serves as a scaffold for the assembly of a functional preinitiation complex with RNA polymerase II and the general transcription factors. This Schizosaccharomyces pombe (strain 972 / ATCC 24843) (Fission yeast) protein is Mediator of RNA polymerase II transcription subunit 14 (med14).